The primary structure comprises 335 residues: Nonaprenyl diphosphate synthase (335 aa).

Isopentenyl diphosphate contacts are provided by Lys57, Arg60, and His90. 2 residues coordinate Mg(2+): Asp97 and Asp101. The DDXXD motif motif lies at 97 to 101; it reads DDVMD. Isopentenyl diphosphate is bound at residue Arg107. The short motif at 223-227 is the DDXXD motif element; the sequence is DDIID.

It belongs to the FPP/GGPP synthase family. Requires Mg(2+) as cofactor.

It carries out the reaction isopentenyl diphosphate + (2E)-geranyl diphosphate = (2E,6E)-farnesyl diphosphate + diphosphate. It catalyses the reaction isopentenyl diphosphate + (2E,6E)-farnesyl diphosphate = (2E,6E,10E)-geranylgeranyl diphosphate + diphosphate. The catalysed reaction is 5 isopentenyl diphosphate + (2E,6E,10E)-geranylgeranyl diphosphate = all-trans-nonaprenyl diphosphate + 5 diphosphate. Its pathway is isoprenoid biosynthesis; farnesyl diphosphate biosynthesis; farnesyl diphosphate from geranyl diphosphate and isopentenyl diphosphate. It participates in isoprenoid biosynthesis; geranylgeranyl diphosphate biosynthesis; geranylgeranyl diphosphate from farnesyl diphosphate and isopentenyl diphosphate: step 1/1. Its function is as follows. Catalyzes the sequential condensations of isopentenyl pyrophosphate (IPP) with geranyl diphosphate (GPP) to yield (2E,6E)-farnesyl diphosphate (E,E-FPP), with E,E-FPP to yield geranylgeranyl diphosphate (GGPP) and with GGPP to yield nonaprenyl diphosphate. May also have weak activity with dimethylallyl diphosphate (DMAPP). In Mycobacterium tuberculosis (strain ATCC 25618 / H37Rv), this protein is Nonaprenyl diphosphate synthase.